The following is a 723-amino-acid chain: MGDQQNAGKCPVMHGAMTSAGKSNMDWWPNNLNLDILHQHDRKTNPMGEDFDYREEVQKLDFDAVKKDLTELMTNSQDWWPADWGHYGGLMIRMAWHAAGSYRVADGRGGGGTGNQRFAPINSWPDNANLDKARRLLWPIKKKYGNKLSWADLIILAGNVAYESMGFKTFGFSFGREDIWHPEKDTYWGSEKEWLAPSDNPESRYSGDRESLENPLAAVMMGLIYVNPEGVDGNPDPLKTAEDVRVTFARMAMNDEETVALTAGGHTVGKCHGNGDAEKIGPEPEAADVEEQGLGWRNLASRGVGRDTVTSGLEGAWTTHPTRWDDGYFDMLLNHEWELTKSPAGAWQWQPVDIKEEDMPVDVEDPSIRHMPMMTDADMAMKMDPEYRKYAERFQKDPEYFNEVFARAWFKLIHRDMGPKTRYIGPEAPDEDLIWQDPVPAGNTGYDVDAVKAKIADSGLSISEMVATAWDSARTFRGSDYRGGANGARIRLAPQKDWEGNEPERLSKVLGVLEGIAADTGASVADTIVLAGNVGIEQAAKAAGHDITVPFAPGRGDASQEMTDEESFEYLEPLSDGYRNWLKKDYAVAPEEMMLDRTQLLGLTAPEMTVLIGGMRVLGTNHGGTQHGVFTDREGQLTNDFFVNLTDMNYAWEPVGNNLYEIRDRKTGETRWTATRVDLVFGSNSILRSYAEVYAQDDNKEKFVKDFVAAWNKVMNADRFDLA.

The segment at residues 96–225 (WHAAGSYRVA…LAAVMMGLIY (130 aa)) is a cross-link (tryptophyl-tyrosyl-methioninium (Trp-Tyr) (with M-251)). Histidine 97 serves as the catalytic Proton acceptor. A cross-link (tryptophyl-tyrosyl-methioninium (Tyr-Met) (with W-96)) is located at residues 225-251 (YVNPEGVDGNPDPLKTAEDVRVTFARM). Histidine 266 contributes to the heme b binding site.

This sequence belongs to the peroxidase family. Peroxidase/catalase subfamily. In terms of assembly, homodimer or homotetramer. Heme b is required as a cofactor. Post-translationally, formation of the three residue Trp-Tyr-Met cross-link is important for the catalase, but not the peroxidase activity of the enzyme.

It carries out the reaction H2O2 + AH2 = A + 2 H2O. It catalyses the reaction 2 H2O2 = O2 + 2 H2O. In terms of biological role, bifunctional enzyme with both catalase and broad-spectrum peroxidase activity. In Alkalilimnicola ehrlichii (strain ATCC BAA-1101 / DSM 17681 / MLHE-1), this protein is Catalase-peroxidase.